Consider the following 63-residue polypeptide: Large ribosomal subunit protein bL32 (63 aa).

Over residues 1–18 (MAHPKAKVSKSRRDKRRA) the composition is skewed to basic residues. The segment at 1–25 (MAHPKAKVSKSRRDKRRAQFNARTK) is disordered.

Belongs to the bacterial ribosomal protein bL32 family.

The sequence is that of Large ribosomal subunit protein bL32 from Chlorobium phaeovibrioides (strain DSM 265 / 1930) (Prosthecochloris vibrioformis (strain DSM 265)).